A 308-amino-acid polypeptide reads, in one-letter code: tRNA pseudouridine synthase B (308 aa).

The active-site Nucleophile is the Asp-47.

This sequence belongs to the pseudouridine synthase TruB family. Type 1 subfamily.

It carries out the reaction uridine(55) in tRNA = pseudouridine(55) in tRNA. Responsible for synthesis of pseudouridine from uracil-55 in the psi GC loop of transfer RNAs. The chain is tRNA pseudouridine synthase B from Xanthomonas oryzae pv. oryzae (strain MAFF 311018).